The sequence spans 347 residues: tRNA N6-adenosine threonylcarbamoyltransferase (347 aa).

Positions 117 and 121 each coordinate Fe cation. Substrate is bound by residues 140-144, Asp-173, Gly-186, and Asn-280; that span reads LVSGG. Residue Asp-308 coordinates Fe cation.

Belongs to the KAE1 / TsaD family. Fe(2+) serves as cofactor.

The protein localises to the cytoplasm. It carries out the reaction L-threonylcarbamoyladenylate + adenosine(37) in tRNA = N(6)-L-threonylcarbamoyladenosine(37) in tRNA + AMP + H(+). Functionally, required for the formation of a threonylcarbamoyl group on adenosine at position 37 (t(6)A37) in tRNAs that read codons beginning with adenine. Is involved in the transfer of the threonylcarbamoyl moiety of threonylcarbamoyl-AMP (TC-AMP) to the N6 group of A37, together with TsaE and TsaB. TsaD likely plays a direct catalytic role in this reaction. The sequence is that of tRNA N6-adenosine threonylcarbamoyltransferase from Psychrobacter sp. (strain PRwf-1).